Reading from the N-terminus, the 556-residue chain is Urocanate hydratase (556 aa).

NAD(+) is bound by residues 53–54, Gln-131, 177–179, Glu-197, 243–244, 264–268, 274–275, and Tyr-323; these read GG, GMG, NA, QTSAH, and YL. Residue Cys-411 is part of the active site. Residue Gly-493 participates in NAD(+) binding.

The protein belongs to the urocanase family. The cofactor is NAD(+).

Its subcellular location is the cytoplasm. It catalyses the reaction 4-imidazolone-5-propanoate = trans-urocanate + H2O. The protein operates within amino-acid degradation; L-histidine degradation into L-glutamate; N-formimidoyl-L-glutamate from L-histidine: step 2/3. Catalyzes the conversion of urocanate to 4-imidazolone-5-propionate. This is Urocanate hydratase from Pseudomonas fluorescens (strain SBW25).